The primary structure comprises 116 residues: U16-barytoxin-Tl1d (116 aa).

The first 20 residues, 1 to 20 (MKTIIVFLSLLVLATKFGDA), serve as a signal peptide directing secretion. A propeptide spanning residues 21 to 74 (NEGVNQEQMKEVIQNEFREDFLNEMAAMSLLQQLEAIESTLLEKEADRNSRQKR) is cleaved from the precursor. 3 cysteine pairs are disulfide-bonded: Cys-75–Cys-90, Cys-82–Cys-95, and Cys-89–Cys-110.

It belongs to the neurotoxin 14 (magi-1) family. 06 (ICK-Trit) subfamily. Expressed by the venom gland.

Its subcellular location is the secreted. Ion channel inhibitor. In Trittame loki (Brush-footed trapdoor spider), this protein is U16-barytoxin-Tl1d.